The chain runs to 816 residues: Nicotine 6-hydroxylase large subunit (816 aa).

Glu745 is a binding site for Mo-molybdopterin cytosine dinucleotide.

The protein belongs to the xanthine dehydrogenase family. As to quaternary structure, heterotrimer composed of a large subunit (NdhL), a medium subunit (NdhM) and a small subunit (NdhS). The cofactor is Mo-molybdopterin cytosine dinucleotide.

The protein localises to the cytoplasm. It catalyses the reaction (R)-nicotine + A + H2O = (R)-6-hydroxynicotine + AH2. It carries out the reaction (S)-nicotine + A + H2O = (S)-6-hydroxynicotine + AH2. It participates in alkaloid degradation; nicotine degradation; 6-hydroxypseudooxynicotine from nicotine (R-isomer route): step 1/2. The protein operates within alkaloid degradation; nicotine degradation; 6-hydroxypseudooxynicotine from nicotine (S-isomer route): step 1/2. Its activity is regulated as follows. Nicotine dehydrogenase activity is inhibited by tungsten. Component of the nicotine 6-hydroxylase, which is involved in the degradation of nicotine. Catalyzes the hydroxylation of the pyridine ring at C6 to form 6-hydroxynicotine. Can use both L-nicotine and D-nicotine. The sequence is that of Nicotine 6-hydroxylase large subunit from Paenarthrobacter nicotinovorans (Arthrobacter nicotinovorans).